A 674-amino-acid chain; its full sequence is Probable 3',5'-cyclic-AMP phosphodiesterase pde-4 (674 aa).

Residues 1–82 (MPRRRGSSSS…TSSASSYHPP (82 aa)) are disordered. Residues 15 to 24 (GGSGGGGGFG) are compositionally biased toward gly residues. Low complexity predominate over residues 39 to 62 (RTSSPSASSTSRTPPAALPPRTSA). Polar residues predominate over residues 66–78 (PGSNHKLTSSASS). Residues 328–660 (HVPEYGVNCA…EWYQSRIPEE (333 aa)) enclose the PDEase domain. Catalysis depends on His407, which acts as the Proton donor. Positions 411, 447, 448, and 565 each coordinate a divalent metal cation.

This sequence belongs to the cyclic nucleotide phosphodiesterase family. A divalent metal cation serves as cofactor. In terms of tissue distribution, expressed in dorsal D (DD) motor neurons and several other neurons at the L1 stage. Expression in DD neurons decreases gradually beginning in the late L1 stage. Highly expressed in adult ventral D (VD) motor neurons, but diminished in adult DD motor neurons.

It catalyses the reaction 3',5'-cyclic AMP + H2O = AMP + H(+). Functionally, hydrolyzes the second messenger 3',5'-cyclic AMP (cAMP), which is a key regulator of many important physiological processes. Antagonizes dorsal D (DD) motor neuron respecification by reducing levels of cAMP. This Caenorhabditis elegans protein is Probable 3',5'-cyclic-AMP phosphodiesterase pde-4 (pde-4).